The primary structure comprises 137 residues: L-ectoine synthase (137 aa).

A disordered region spans residues 118–137 (VHREDGSYAPADEADDQKPL).

It belongs to the ectoine synthase family.

The catalysed reaction is (2S)-4-acetamido-2-aminobutanoate = L-ectoine + H2O. Its pathway is amine and polyamine biosynthesis; ectoine biosynthesis; L-ectoine from L-aspartate 4-semialdehyde: step 3/3. Seems to require potassium ions for its activity and stability. Slightly inhibited by N-ethylmaleimide. Its function is as follows. Catalyzes the circularization of gamma-N-acetyl-alpha,gamma-diaminobutyric acid (ADABA) to ectoine (1,4,5,6-tetrahydro-2-methyl-4-pyrimidine carboxylic acid), which is an excellent osmoprotectant. Does not act on N-acetylated amino acids like N-alpha-acetyl-L-asparagine,N-alpha-acetyl-L-ornithine, N-alpha-acetyl-L-lysine and N-epsilon-acetyl-L-lysine. The sequence is that of L-ectoine synthase (ectC) from Halomonas elongata (strain ATCC 33173 / DSM 2581 / NBRC 15536 / NCIMB 2198 / 1H9).